The sequence spans 131 residues: MALWVTAVLALACLGGLAAPGPVPRSVSLPLTLKELIEELSNITQDQTPLCNGSMVWSVDLAAGGFCVALDSLTNISNCNAIYRTQRILHGLCNRKAPTTVSSLPDTKIEVAHFITKLLSYTKQLFRHGPF.

A signal peptide spans 1-18 (MALWVTAVLALACLGGLA). Residues asparagine 42, asparagine 52, and asparagine 75 are each glycosylated (N-linked (GlcNAc...) asparagine). 2 disulfide bridges follow: cysteine 51–cysteine 79 and cysteine 67–cysteine 93.

It belongs to the IL-4/IL-13 family. As to quaternary structure, interacts with IL13RA2.

Its subcellular location is the secreted. Cytokine that plays important roles in allergic inflammation and immune response to parasite infection. Synergizes with IL2 in regulating interferon-gamma synthesis. Stimulates B-cell proliferation, and activation of eosinophils, basophils, and mast cells. Plays an important role in controlling IL33 activity by modulating the production of transmembrane and soluble forms of interleukin-1 receptor-like 1/IL1RL1. Displays the capacity to antagonize Th1-driven proinflammatory immune response and downregulates synthesis of many proinflammatory cytokines including IL1, IL6, IL10, IL12 and TNF-alpha through a mechanism that partially involves suppression of NF-kappa-B. Also functions on nonhematopoietic cells, including endothelial cells where it induces vascular cell adhesion protein 1/VCAM1, which is important in the recruitment of eosinophils. Exerts its biological effects through its receptors which comprises the IL4R chain and the IL13RA1 chain, to activate JAK1 and TYK2, leading to the activation of STAT6. Aside from IL13RA1, another receptor IL13RA2 acts as a high affinity decoy for IL13 and mediates internalization and depletion of extracellular IL13. This Mus musculus (Mouse) protein is Interleukin-13 (Il13).